A 214-amino-acid polypeptide reads, in one-letter code: Adenylate kinase (214 aa).

10-15 contacts ATP; it reads GAGKGT. The segment at 30 to 59 is NMP; the sequence is STGDMLRAAIKAGTELGKQAKSVIDAGQLV. AMP is bound by residues Thr31, Arg36, 57-59, 85-88, and Gln92; these read QLV and GFPR. An LID region spans residues 122–159; it reads GRRAHLPSGRTYHNVYNPPKEEGKDDITGEELVVRDDD. ATP contacts are provided by residues Arg123 and 132-133; that span reads TY. AMP-binding residues include Arg156 and Arg167. ATP is bound at residue Lys200.

This sequence belongs to the adenylate kinase family. As to quaternary structure, monomer.

The protein resides in the cytoplasm. The enzyme catalyses AMP + ATP = 2 ADP. It functions in the pathway purine metabolism; AMP biosynthesis via salvage pathway; AMP from ADP: step 1/1. Its function is as follows. Catalyzes the reversible transfer of the terminal phosphate group between ATP and AMP. Plays an important role in cellular energy homeostasis and in adenine nucleotide metabolism. This is Adenylate kinase from Vibrio atlanticus (strain LGP32) (Vibrio splendidus (strain Mel32)).